Reading from the N-terminus, the 795-residue chain is uncharacterized protein (795 aa).

This is an uncharacterized protein from Methanocaldococcus jannaschii (strain ATCC 43067 / DSM 2661 / JAL-1 / JCM 10045 / NBRC 100440) (Methanococcus jannaschii).